We begin with the raw amino-acid sequence, 660 residues long: Probable beta-hexosaminidase fdl (660 aa).

The signal sequence occupies residues 1–36; the sequence is MSLAVSLRRALLVLLTGAIFILTVLYWNQGVTKAQA. Asparagine 210, asparagine 412, and asparagine 452 each carry an N-linked (GlcNAc...) asparagine glycan.

It belongs to the glycosyl hydrolase 20 family. As to expression, in third instar larval and early pupal brains, expressed in cells sending projections across the interhemispheric junction. In adult brain, expressed in mushroom body, ellipsoid body and pars intercerebralis.

The catalysed reaction is Hydrolysis of terminal non-reducing N-acetyl-D-hexosamine residues in N-acetyl-beta-D-hexosaminides.. Functionally, involved in brain restructurization via hormonal control during metamorphosis. Implicated in N-glycan processing. In Drosophila melanogaster (Fruit fly), this protein is Probable beta-hexosaminidase fdl (fdl).